The chain runs to 395 residues: uncharacterized protein (395 aa).

Residues 182-238 (KKLEDILSTIAEIEDSIELEKILSLDQFLKSKLSNIKITNNQIDEAKAEFKEMFNKK) adopt a coiled-coil conformation.

This is an uncharacterized protein from Acanthamoeba polyphaga (Amoeba).